We begin with the raw amino-acid sequence, 279 residues long: Succinate dehydrogenase [ubiquinone] iron-sulfur subunit 1, mitochondrial (279 aa).

The transit peptide at 1-28 (MASGLIGRLVGTKPSKLATAARLIPARW) directs the protein to the mitochondrion. The 2Fe-2S ferredoxin-type domain maps to 52 to 141 (FQIYRWNPDN…ETTITPLPHM (90 aa)). [2Fe-2S] cluster is bound by residues cysteine 102, cysteine 107, and cysteine 122. The 4Fe-4S ferredoxin-type domain maps to 184–214 (DRAKLDGMYECILCACCSTSCPSYWWNPESY). Cysteine 194, cysteine 197, and cysteine 200 together coordinate [4Fe-4S] cluster. Cysteine 204 contacts [3Fe-4S] cluster. Tryptophan 209 is a binding site for a ubiquinone. [3Fe-4S] cluster-binding residues include cysteine 251 and cysteine 257. Residue cysteine 261 coordinates [4Fe-4S] cluster.

The protein belongs to the succinate dehydrogenase/fumarate reductase iron-sulfur protein family. As to quaternary structure, component of complex II composed of eight subunits in plants: four classical SDH subunits SDH1, SDH2, SDH3 and SDH4 (a flavoprotein (FP), an iron-sulfur protein (IP), and a cytochrome b composed of a large and a small subunit.), as well as four subunits unknown in mitochondria from bacteria and heterotrophic eukaryotes. [2Fe-2S] cluster is required as a cofactor. It depends on [3Fe-4S] cluster as a cofactor. The cofactor is [4Fe-4S] cluster. In terms of tissue distribution, ubiquitous. Preferentially expressed in flowers and inflorescences.

It is found in the mitochondrion inner membrane. The enzyme catalyses a quinone + succinate = fumarate + a quinol. It participates in carbohydrate metabolism; tricarboxylic acid cycle; fumarate from succinate (eukaryal route): step 1/1. Its function is as follows. Iron-sulfur protein (IP) subunit of succinate dehydrogenase (SDH) that is involved in complex II of the mitochondrial electron transport chain and is responsible for transferring electrons from succinate to ubiquinone (coenzyme Q). The sequence is that of Succinate dehydrogenase [ubiquinone] iron-sulfur subunit 1, mitochondrial (SDH2-1) from Arabidopsis thaliana (Mouse-ear cress).